A 586-amino-acid polypeptide reads, in one-letter code: Pyruvate kinase (586 aa).

Arg-32 lines the substrate pocket. K(+) contacts are provided by Asn-34, Ser-36, Asp-66, and Thr-67. Asn-34–His-37 lines the ATP pocket. ATP is bound by residues Arg-73 and Lys-156. A Mg(2+)-binding site is contributed by Glu-222. Residues Gly-245, Asp-246, and Thr-278 each coordinate substrate. Mg(2+) is bound at residue Asp-246.

This sequence belongs to the pyruvate kinase family. The protein in the C-terminal section; belongs to the PEP-utilizing enzyme family. As to quaternary structure, homotetramer. The cofactor is Mg(2+). Requires K(+) as cofactor.

The enzyme catalyses pyruvate + ATP = phosphoenolpyruvate + ADP + H(+). The protein operates within carbohydrate degradation; glycolysis; pyruvate from D-glyceraldehyde 3-phosphate: step 5/5. The chain is Pyruvate kinase (pyk) from Sporosarcina psychrophila (Bacillus psychrophilus).